Here is a 275-residue protein sequence, read N- to C-terminus: Cis-2,3-dihydrobiphenyl-2,3-diol dehydrogenase (275 aa).

NAD(+) is bound at residue 9–33; that stretch reads LITGGASGLGRALVDRFVAEAKVAV. Serine 140 is a substrate binding site. Tyrosine 153 functions as the Proton acceptor in the catalytic mechanism.

Belongs to the short-chain dehydrogenases/reductases (SDR) family.

It carries out the reaction (2R,3S)-3-phenylcyclohexa-3,5-diene-1,2-diol + NAD(+) = biphenyl-2,3-diol + NADH + H(+). The protein operates within xenobiotic degradation; biphenyl degradation; 2-hydroxy-2,4-pentadienoate and benzoate from biphenyl: step 2/4. The polypeptide is Cis-2,3-dihydrobiphenyl-2,3-diol dehydrogenase (bphB) (Metapseudomonas furukawaii (Pseudomonas furukawaii)).